The chain runs to 1773 residues: Zinc finger CCCH domain-containing protein 19 (1773 aa).

Residues Ser145–Leu166 form a disordered region. Positions Asp147 to Ser156 are enriched in basic and acidic residues. Positions Gly196–Thr218 form a coiled coil. 3 disordered regions span residues Ile270–Glu290, Asp361–Thr409, and Ile434–Lys591. Composition is skewed to basic and acidic residues over residues Gly273–Val286 and Asp361–Glu378. Residues Ala403–Met437 adopt a coiled-coil conformation. 2 stretches are compositionally biased toward basic and acidic residues: residues Met444–Asn455 and Lys497–Arg513. 2 stretches are compositionally biased toward acidic residues: residues Ile514 to Ala529 and Glu551 to Glu572. A compositionally biased stretch (basic residues) spans Gly578–Lys588. A Nuclear localization signal 1 motif is present at residues Arg581–Lys588. The segment at Glu599 to Ser665 adopts a PHD-type zinc-finger fold. The segment covering Ala741–Asn751 has biased composition (basic and acidic residues). Residues Ala741–Asp797 are disordered. The span at Ala752–Asp762 shows a compositional bias: polar residues. Positions Ser801–Lys884 constitute an SWIB/MDM2 domain. A compositionally biased stretch (basic and acidic residues) spans Pro903–Gly919. The disordered stretch occupies residues Pro903–Arg935. A compositionally biased stretch (basic residues) spans Lys920–Arg935. Residues Asp921–Lys928 carry the Nuclear localization signal 2 motif. Positions Ala944 to Val1076 constitute a Plus3 domain. A compositionally biased stretch (basic and acidic residues) spans Glu1139–Pro1152. Residues Glu1139–Ala1274 are disordered. Residues Asp1153–Glu1163 show a composition bias toward acidic residues. The span at Phe1193–Arg1212 shows a compositional bias: polar residues. Ser1281 carries the post-translational modification Phosphoserine. The region spanning Glu1307 to Ala1361 is the GYF domain. 4 stretches are compositionally biased toward polar residues: residues Arg1409 to Thr1433, Ser1441 to Thr1469, Val1499 to Ser1509, and Ser1518 to Gly1528. Disordered regions lie at residues Arg1409 to Thr1469, Gln1485 to Gln1605, and Gly1649 to Asn1746. Residues Ser1529–Pro1555 are compositionally biased toward low complexity. Residues Ser1569–Trp1579 are compositionally biased toward polar residues. 2 stretches are compositionally biased toward low complexity: residues Asn1585–Ser1602 and Gln1666–Ala1677. Polar residues predominate over residues Gly1678–Ile1708. Positions Gly1722 to Gly1735 are enriched in low complexity. Polar residues predominate over residues Asn1737–Asn1746. The segment at Phe1747–Asn1773 adopts a C3H1-type zinc-finger fold.

Interacts with unmethylated histone H3 and AGO2. The interaction with AGO2 in required to direct DNA methylation and silencing. As to expression, expressed in seedlings, mostly in the vasculature and shoot apices of young seedlings.

The protein resides in the nucleus. Functionally, plays a central role in integrating RNA silencing and chromatin signals in 21 nt siRNA-dependent DNA methylation on cytosine pathway leading to transcriptional gene silencing of specific sequences. Involved in a chromatin-based RNA silencing pathway that encompasses both post-transcriptional gene silencing (PTGS) (e.g. RDR1, RDR6 and AGO2) and transcriptional gene silencing (TGS) (e.g. siRNA-dependent DNA methylation and histone H3) components. Mediates siRNA accumulation at specific chromatin loci. Binds H3K4me0 through its PHD to enforce low levels of H3K4 methylation and gene silencing at a subset of genomic loci. The protein is Zinc finger CCCH domain-containing protein 19 (NERD) of Arabidopsis thaliana (Mouse-ear cress).